Here is a 310-residue protein sequence, read N- to C-terminus: Thioesterase pytI (310 aa).

2 helical membrane passes run 14-34 (SLTPLILIHAISGLALPYFAL) and 95-115 (LLGGWSMGGMLAIEMAAIFVA). Residues 168–195 (TLSDDASTTTSSDNSRASTDHGADSEVE) form a disordered region. Positions 170-184 (SDDASTTTSSDNSRA) are enriched in low complexity.

The protein belongs to the AMT4 thioesterase family.

It is found in the membrane. It functions in the pathway secondary metabolite biosynthesis. Functionally, thioesterase; part of the gene cluster that mediates the biosynthesis of pyranterreones, a family of antioxidative compounds. The first step of pyranonigrins biosynthesis is performed by the hybrid PKS-NRPS synthetase pytA that condenses 4 malonyl-CoA units ato the acetyl starter unit by the modular PKS of pytA. The acyl chain is then connected to an L-serine through the amide bond by the modular NRPS of pytA. A tetramic acid is formed and released from the PKS-NRPS pytA to give pyranterreone 5 with the help of the thioesterase pytI. Pyranterreone 5 could be methylated by pytC to afford pyranterreone 6. Both pyranterreones 5 and 6 are subsequently oxidized by the FAD-linked oxidoreductase pytB and the cytochrome P450 monooxygenase pytD to form the fused gamma-pyrone core, resulting in pyranterreones 7 and 11, respectively. The hydroxy group at C-8 of pyranterreones 7 and 11 are dehydrated by the aspartyl protease pytH to form a delta-7 double bond to give pyranterreones 3 and 1, 2 accordingly. The exo-methylene of pyranterreone 3 could be reduced into a pendant methyl by reductase pytE to provide pyranterreone 4, also known as cordylactam. Pyranterreone 4 can be reconverted to pyranterreone 3 through pytB-catalyzed dehydrogenation or further oxidized to pyranterreones 9 and 10. This is Thioesterase pytI from Aspergillus terreus.